A 314-amino-acid polypeptide reads, in one-letter code: Deoxyhypusine hydroxylase (314 aa).

Met-1 is modified (N-acetylmethionine). 5 HEAT-like PBS-type repeats span residues 61–87, 94–120, 188–214, 219–245, and 252–278; these read LAHEAAFALGQMQDAEAIPALESVLND, VRHEAAEALGAIGLAGNVNILKKSLSS, ERYAALFALRNHGGEEAVSAIVDSLSA, LRHEVAYVLGQLQSKTALATLSKVLRD, and VRHEAAEALGSIADEQSIALLEEFSKD. 4 residues coordinate Fe cation: His-63, Glu-64, His-96, and Glu-97. His-221, Glu-222, His-254, and Glu-255 together coordinate Fe cation.

The protein belongs to the deoxyhypusine hydroxylase family. Fe(2+) serves as cofactor.

It catalyses the reaction [eIF5A protein]-deoxyhypusine + AH2 + O2 = [eIF5A protein]-hypusine + A + H2O. It functions in the pathway protein modification; eIF5A hypusination. Catalyzes the hydroxylation of the N(6)-(4-aminobutyl)-L-lysine intermediate to form hypusine, an essential post-translational modification only found in mature eIF-5A factor. This Arabidopsis thaliana (Mouse-ear cress) protein is Deoxyhypusine hydroxylase.